The chain runs to 1095 residues: Solute carrier family 12 member 1 (1095 aa).

At 1-173 (MSVNIPSNSV…EEDVTGVVKF (173 aa)) the chain is on the cytoplasmic side. Residues 16 to 19 (RFQV) carry the RFXV motif motif. The tract at residues 26–45 (HGSGAAMSDSTDPPHYEETS) is disordered. Phosphoserine occurs at positions 57 and 87. 4 positions are modified to phosphothreonine: T91, T96, T101, and T114. Residue S116 is modified to Phosphoserine. Phosphoserine; by AMPK is present on S126. A Phosphoserine modification is found at S144. Residues 174 to 194 (GWVKGVLVRCMLNIWGVMLFI) traverse the membrane as a helical segment. The Extracellular portion of the chain corresponds to 195 to 197 (RLS). The helical transmembrane segment at 198–218 (WIVGEAGIGLGVIIIGLSVVV) threads the bilayer. Residues 219-255 (TTLTGISMSAICTNGVVRGGGAYYLISRSLGPEFGGS) are Cytoplasmic-facing. Residues 256–276 (IGLIFRFANAVRVAMYVVGFA) form a helical membrane-spanning segment. The Extracellular portion of the chain corresponds to 277-298 (ETVVDLLKESDSMMVDPTNDIR). Residues 299-319 (IIGSITVVILLGISVAGMEWE) form a helical membrane-spanning segment. Topologically, residues 320-323 (AKAQ) are cytoplasmic. A helical membrane pass occupies residues 324 to 344 (VILLVILLIGIANFFIGTVIP). Over 345–375 (SNNEKKSRGFFNYQASIFAENFGPSFTEGEG) the chain is Extracellular. Residues 376–396 (FFSVFAIFFPAATGILAGANI) form a helical membrane-spanning segment. Topologically, residues 397 to 413 (SGDLEDPQDAIPRGTML) are cytoplasmic. Residues 414–434 (AIFITTVAYIGVAICVRACVV) form a helical membrane-spanning segment. The Extracellular segment spans residues 435–546 (RDATGSMNDT…NNEPLRGYFL (112 aa)). Residues N442 and N452 are each glycosylated (N-linked (GlcNAc...) asparagine). A run of 2 helical transmembrane segments spans residues 547–567 (TFVI…APII) and 568–588 (SNFF…ASYA). At 589–605 (KSPGWRPAYGIYNMWVS) the chain is on the extracellular side. The chain crosses the membrane as a helical span at residues 606 to 626 (LFGAILCCAVMFVINWWAAVI). Topologically, residues 627–1095 (TYVIELFLYI…NHKNVLTFYS (469 aa)) are cytoplasmic.

The protein belongs to the SLC12A transporter family. When phosphorylated, interacts with PPP3CB. In terms of processing, phosphorylated at Ser-87, Thr-96 and Thr-101 by OXSR1/OSR1 and STK39/SPAK downstream of WNK kinases (WNK1, WNK2, WNK3 or WNK4), promoting its activity. Expressed predominantly in kidney (at protein level).

The protein localises to the apical cell membrane. It catalyses the reaction K(+)(out) + 2 chloride(out) + Na(+)(out) = K(+)(in) + 2 chloride(in) + Na(+)(in). Activated following phosphorylation by OXSR1/OSR1 and STK39/SPAK downstream of WNK kinases (WNK1, WNK2, WNK3 or WNK4). In terms of biological role, renal sodium, potassium and chloride ion cotransporter that mediates the transepithelial NaCl reabsorption in the thick ascending limb and plays an essential role in the urinary concentration and volume regulation. Electrically silent transporter system. This chain is Solute carrier family 12 member 1 (Slc12a1), found in Rattus norvegicus (Rat).